We begin with the raw amino-acid sequence, 239 residues long: Ribonuclease PH (239 aa).

Phosphate is bound by residues Arg86 and Gly124 to Arg126.

The protein belongs to the RNase PH family. Homohexameric ring arranged as a trimer of dimers.

The catalysed reaction is tRNA(n+1) + phosphate = tRNA(n) + a ribonucleoside 5'-diphosphate. Phosphorolytic 3'-5' exoribonuclease that plays an important role in tRNA 3'-end maturation. Removes nucleotide residues following the 3'-CCA terminus of tRNAs; can also add nucleotides to the ends of RNA molecules by using nucleoside diphosphates as substrates, but this may not be physiologically important. Probably plays a role in initiation of 16S rRNA degradation (leading to ribosome degradation) during starvation. The polypeptide is Ribonuclease PH (Rickettsia africae (strain ESF-5)).